The primary structure comprises 122 residues: Large ribosomal subunit protein uL14 (122 aa).

Belongs to the universal ribosomal protein uL14 family. In terms of assembly, part of the 50S ribosomal subunit. Forms a cluster with proteins L3 and L19. In the 70S ribosome, L14 and L19 interact and together make contacts with the 16S rRNA in bridges B5 and B8.

In terms of biological role, binds to 23S rRNA. Forms part of two intersubunit bridges in the 70S ribosome. The protein is Large ribosomal subunit protein uL14 of Pelagibacter ubique (strain HTCC1062).